Reading from the N-terminus, the 402-residue chain is Succinyl-CoA--D-citramalate CoA-transferase (402 aa).

Catalysis depends on Asp-174, which acts as the Nucleophile.

It belongs to the CoA-transferase III family. As to quaternary structure, homodimer.

It catalyses the reaction (3R)-citramalate + succinyl-CoA = (3R)-citramalyl-CoA + succinate. The enzyme catalyses (R)-malate + succinyl-CoA = (R)-malyl-CoA + succinate. Functionally, involved in the 3-hydroxypropionate cycle used for autotrophic carbon dioxide fixation, and in the glyoxylate assimilation cycle used to regenerate acetyl-CoA and produce pyruvate as universal precursor for biosynthesis. Catalyzes the transfer of CoA moiety from succinyl-CoA to D-citramalate to yield citramalyl-CoA. The polypeptide is Succinyl-CoA--D-citramalate CoA-transferase (Chloroflexus aurantiacus (strain ATCC 29366 / DSM 635 / J-10-fl)).